A 629-amino-acid chain; its full sequence is Phosphomethylpyrimidine synthase (629 aa).

Substrate is bound by residues Asn-215, Met-244, Tyr-273, His-309, 329 to 331 (SRG), 370 to 373 (DGLR), and Glu-409. His-413 provides a ligand contact to Zn(2+). A substrate-binding site is contributed by Tyr-436. A Zn(2+)-binding site is contributed by His-477. [4Fe-4S] cluster is bound by residues Cys-557, Cys-560, and Cys-565. Residues 589 to 610 (ENIKRETSAEEAEEAREGMSDM) form a disordered region.

This sequence belongs to the ThiC family. In terms of assembly, homodimer. Requires [4Fe-4S] cluster as cofactor.

The catalysed reaction is 5-amino-1-(5-phospho-beta-D-ribosyl)imidazole + S-adenosyl-L-methionine = 4-amino-2-methyl-5-(phosphooxymethyl)pyrimidine + CO + 5'-deoxyadenosine + formate + L-methionine + 3 H(+). It functions in the pathway cofactor biosynthesis; thiamine diphosphate biosynthesis. Catalyzes the synthesis of the hydroxymethylpyrimidine phosphate (HMP-P) moiety of thiamine from aminoimidazole ribotide (AIR) in a radical S-adenosyl-L-methionine (SAM)-dependent reaction. The sequence is that of Phosphomethylpyrimidine synthase from Erythrobacter litoralis (strain HTCC2594).